We begin with the raw amino-acid sequence, 425 residues long: Peroxisomal membrane protein PEX14 (425 aa).

2 disordered regions span residues 49–89 and 247–425; these read RSQG…YRNA and DEPI…AAQS. Residues 56–76 are compositionally biased toward low complexity; that stretch reads SSSVASQVSSYSPSASQSSVA. The SH3-binding motif lies at 89–97; sequence APPLPERDW. Over residues 256–297 the composition is skewed to polar residues; the sequence is PSLTTGANSLTSESSGRSSIPHSQSVPIRTQLTTPPSDSDTS. Composition is skewed to basic and acidic residues over residues 315–324 and 333–366; these read DILRKEKNRT and LGKD…PEED.

Belongs to the peroxin-14 family. Interacts with PEX13 (via SH3 domain); forming the PEX13-PEX14 docking complex. Interacts with PEX5 (via WxxxF/Y motifs). Interacts with PEX20 (via WxxxF/Y motifs). Interacts with PEX3, PEX7, PEX8 and PEX17. Post-translationally, phosphorylated on serine or threonine residues.

It is found in the peroxisome membrane. Its function is as follows. Component of the PEX13-PEX14 docking complex, a translocon channel that specifically mediates the import of peroxisomal cargo proteins bound to PEX5 or PEX20 receptors. The PEX13-PEX14 docking complex forms a large import pore which can be opened to a diameter of about 9 nm. Mechanistically, PEX5 (or PEX20) receptor along with cargo proteins associates with the PEX14 subunit of the PEX13-PEX14 docking complex in the cytosol, leading to the insertion of the receptor into the organelle membrane with the concomitant translocation of the cargo into the peroxisome matrix. The protein is Peroxisomal membrane protein PEX14 of Komagataella pastoris (Yeast).